Here is a 225-residue protein sequence, read N- to C-terminus: Uracil-DNA glycosylase (225 aa).

The Proton acceptor role is filled by Asp65.

It belongs to the uracil-DNA glycosylase (UDG) superfamily. UNG family.

Its subcellular location is the cytoplasm. The catalysed reaction is Hydrolyzes single-stranded DNA or mismatched double-stranded DNA and polynucleotides, releasing free uracil.. Excises uracil residues from the DNA which can arise as a result of misincorporation of dUMP residues by DNA polymerase or due to deamination of cytosine. The protein is Uracil-DNA glycosylase of Bacillus licheniformis (strain ATCC 14580 / DSM 13 / JCM 2505 / CCUG 7422 / NBRC 12200 / NCIMB 9375 / NCTC 10341 / NRRL NRS-1264 / Gibson 46).